A 331-amino-acid polypeptide reads, in one-letter code: Cysteine and histidine-rich domain-containing protein 1 (331 aa).

The residue at position 2 (Ala-2) is an N-acetylalanine. The tract at residues 2-77 (ALLCYNRGCG…KPPEPVKPEV (76 aa)) is interaction with PPP5C. Positions 5, 10, 24, 27, 42, and 43 each coordinate Zn(2+). CHORD domains lie at 5–64 (CYNR…KGRH) and 157–216 (CKNG…RGKH). Thr-47 carries the phosphothreonine modification. Residue Ser-51 is modified to Phosphoserine. Zn(2+) contacts are provided by Cys-59, His-64, Cys-157, Cys-162, Cys-176, His-179, Cys-194, Cys-195, Cys-211, and His-216. The disordered stretch occupies residues 62–82 (GRHNSEKPPEPVKPEVKTTEK). The span at 64–82 (HNSEKPPEPVKPEVKTTEK) shows a compositional bias: basic and acidic residues. The interval 65–316 (NSEKPPEPVK…AEPMQWASLE (252 aa)) is interaction with HSP90AA1 and HSP90AB1. A CS domain is found at 227-316 (VVPCRHDWHQ…AEPMQWASLE (90 aa)).

Interacts with HSP90AA1, HSP90AB1, PPP5C, ROCK1 and ROCK2.

In terms of biological role, regulates centrosome duplication, probably by inhibiting the kinase activity of ROCK2. Proposed to act as co-chaperone for HSP90. May play a role in the regulation of NOD1 via a HSP90 chaperone complex. In vitro, has intrinsic chaperone activity. This function may be achieved by inhibiting association of ROCK2 with NPM1. Plays a role in ensuring the localization of the tyrosine kinase receptor EGFR to the plasma membrane, and thus ensures the subsequent regulation of EGFR activity and EGF-induced actin cytoskeleton remodeling. Involved in stress response. Prevents tumorigenesis. The sequence is that of Cysteine and histidine-rich domain-containing protein 1 (Chordc1) from Rattus norvegicus (Rat).